Consider the following 249-residue polypeptide: Proline-rich antigen (249 aa).

2 stretches are compositionally biased toward pro residues: residues 1 to 20 and 38 to 87; these read MTDQ…PPPG and YPPP…PPGP. The tract at residues 1-87 is disordered; it reads MTDQPPPSGS…GAYAPPPPGP (87 aa). One copy of the 1-1; approximate repeat lies at 34–43; that stretch reads LGSAYPPPTA. Residues 34 to 85 form a 5 X 10 AA tandem repeats of [PV]-G-G-S-Y-P-P-P-P-P region; that stretch reads LGSAYPPPTAPPVGGSYPPPPPPGGSYPPPPPPGGSYPPPPPSTGAYAPPPP. Tandem repeats lie at residues 46–55, 56–65, and 66–75. The stretch at 76–85 is one 1-5; approximate repeat; that stretch reads STGAYAPPPP. An RDD domain is found at 99 to 242; it reads FWVTRVLAYV…KRQTLADKIM (144 aa). A run of 2 repeats spans residues 101–123 and 134–156. Residues 101-156 are 2 X 23 AA approximate repeats; sequence VTRVLAYVIDNIPATVLLGIGMLIQTLTKQEACVTDITQYNVNQYCATQPTGIGML. 3 consecutive transmembrane segments (helical) span residues 104 to 124, 151 to 171, and 212 to 232; these read VLAY…GMLI, TGIG…YLVW, and LAHF…LWDS.

This sequence belongs to the mycobacterial Pra family.

It localises to the cell membrane. The chain is Proline-rich antigen (ag36) from Mycobacterium leprae (strain TN).